Consider the following 177-residue polypeptide: Large ribosomal subunit protein uL6 (177 aa).

This sequence belongs to the universal ribosomal protein uL6 family. As to quaternary structure, part of the 50S ribosomal subunit.

Its function is as follows. This protein binds to the 23S rRNA, and is important in its secondary structure. It is located near the subunit interface in the base of the L7/L12 stalk, and near the tRNA binding site of the peptidyltransferase center. The chain is Large ribosomal subunit protein uL6 from Mesorhizobium japonicum (strain LMG 29417 / CECT 9101 / MAFF 303099) (Mesorhizobium loti (strain MAFF 303099)).